Consider the following 325-residue polypeptide: Probable cell division protein WhiA (325 aa).

Positions 273–306 (SLEELGRLADPPMTKDAVAGRIRRLLSMADRKAK) form a DNA-binding region, H-T-H motif.

It belongs to the WhiA family.

Its function is as follows. Involved in cell division and chromosome segregation. The chain is Probable cell division protein WhiA from Mycobacterium bovis (strain BCG / Tokyo 172 / ATCC 35737 / TMC 1019).